The sequence spans 261 residues: Ribosomal RNA small subunit methyltransferase J (261 aa).

Residues 111–112 (RD), 127–128 (ER), 163–164 (SS), and D181 contribute to the S-adenosyl-L-methionine site.

The protein belongs to the methyltransferase superfamily. RsmJ family.

Its subcellular location is the cytoplasm. It catalyses the reaction guanosine(1516) in 16S rRNA + S-adenosyl-L-methionine = N(2)-methylguanosine(1516) in 16S rRNA + S-adenosyl-L-homocysteine + H(+). Specifically methylates the guanosine in position 1516 of 16S rRNA. The polypeptide is Ribosomal RNA small subunit methyltransferase J (Shewanella sp. (strain MR-4)).